Here is a 159-residue protein sequence, read N- to C-terminus: Ribosomal RNA large subunit methyltransferase H (159 aa).

Positions 76 and 108 each coordinate S-adenosyl-L-methionine.

This sequence belongs to the RNA methyltransferase RlmH family. Homodimer.

Its subcellular location is the cytoplasm. The enzyme catalyses pseudouridine(1915) in 23S rRNA + S-adenosyl-L-methionine = N(3)-methylpseudouridine(1915) in 23S rRNA + S-adenosyl-L-homocysteine + H(+). Specifically methylates the pseudouridine at position 1915 (m3Psi1915) in 23S rRNA. This chain is Ribosomal RNA large subunit methyltransferase H, found in Finegoldia magna (strain ATCC 29328 / DSM 20472 / WAL 2508) (Peptostreptococcus magnus).